We begin with the raw amino-acid sequence, 432 residues long: Lipid-A-disaccharide synthase (432 aa).

Over residues 1 to 11 (MTGIGNQTSGI) the composition is skewed to polar residues. Residues 1-35 (MTGIGNQTSGIETGVHDRAPADGEPTALPISHSPL) form a disordered region.

The protein belongs to the LpxB family.

It catalyses the reaction a lipid X + a UDP-2-N,3-O-bis[(3R)-3-hydroxyacyl]-alpha-D-glucosamine = a lipid A disaccharide + UDP + H(+). The protein operates within bacterial outer membrane biogenesis; LPS lipid A biosynthesis. Its function is as follows. Condensation of UDP-2,3-diacylglucosamine and 2,3-diacylglucosamine-1-phosphate to form lipid A disaccharide, a precursor of lipid A, a phosphorylated glycolipid that anchors the lipopolysaccharide to the outer membrane of the cell. The protein is Lipid-A-disaccharide synthase of Xanthomonas oryzae pv. oryzae (strain MAFF 311018).